The chain runs to 460 residues: Angiopoietin-related protein 3 (460 aa).

The signal sequence occupies residues 1 to 16; sequence MFTIKLLLFIVPLVIS. The tract at residues 17-165 is sufficient to inhibit LPL lipase activity; that stretch reads SRIDQDNSSF…PEHPEVTSLK (149 aa). The tract at residues 17–207 is sufficient to inhibit LIPG/EL phospholipase activity; sequence SRIDQDNSSF…EIENQLRRTS (191 aa). Residues 32–56 are required for inhibition of LPL lipase activity; the sequence is EPKSRFAMLDDVKILANGLLQLGHG. Residues 85–210 adopt a coiled-coil conformation; it reads LSLQTSEIKE…NQLRRTSIQE (126 aa). An N-linked (GlcNAc...) asparagine glycan is attached at Asn-115. The O-linked (GalNAc) threonine glycan is linked to Thr-226. The 219-residue stretch at 237-455 folds into the Fibrinogen C-terminal domain; the sequence is VKHDGIPAEC…STKMLIHPTD (219 aa). Cys-246 and Cys-274 are joined by a disulfide. Residues Asn-296 and Asn-357 are each glycosylated (N-linked (GlcNAc...) asparagine). Residues Cys-394 and Cys-408 are joined by a disulfide bond.

As to quaternary structure, interacts with ANGPTL8. Interacts with ITGB3. Post-translationally, O-glycosylated at Thr-226 by GALNT2; blocks processing and activation by proprotein convertases. In part proteolytically cleaved by proprotein convertases; proposed to be involved in activation. In terms of tissue distribution, expressed principally in liver. Weakly expressed in kidney. Binds to adipocytes. Increased expression and colocalization with activated ITGB3 in glomeruli of patients with nephrotic syndrome showing effaced podocyte foot processes (at protein level).

It is found in the secreted. Its subcellular location is the cell projection. It localises to the lamellipodium. Functionally, acts in part as a hepatokine that is involved in regulation of lipid and glucose metabolism. Proposed to play a role in the trafficking of energy substrates to either storage or oxidative tissues in response to food intake. Has a stimulatory effect on plasma triglycerides (TG), which is achieved by suppressing plasma TG clearance via inhibition of LPL activity. The inhibition of LPL activity appears to be an indirect mechanism involving recruitment of proprotein convertases PCSK6 and FURIN to LPL leading to cleavage and dissociation of LPL from the cell surface; the function does not require ANGPTL3 proteolytic cleavage but seems to be mediated by the N-terminal domain, and is not inhibited by GPIHBP1. Can inhibit endothelial lipase, causing increased plasma levels of high density lipoprotein (HDL) cholesterol and phospholipids. Can bind to adipocytes to activate lipolysis, releasing free fatty acids and glycerol. Suppresses LPL specifically in oxidative tissues which is required to route very low density lipoprotein (VLDL)-TG to white adipose tissue (WAT) for storage in response to food; the function may involve cooperation with circulating, liver-derived ANGPTL8 and ANGPTL4 expression in WAT. Contributes to lower plasma levels of low density lipoprotein (LDL)-cholesterol by a mechanism that is independent of the canonical pathway implicating APOE and LDLR. May stimulate hypothalamic LPL activity. Its function is as follows. In vitro inhibits LPL activity; not effective on GPIHBP1-stabilized LPL. Involved in angiogenesis. Binds to endothelial cells via integrin alpha-V/beta-3 (ITGAV:ITGB3), activates FAK, MAPK and Akt signaling pathways and induces cell adhesion and cell migration. Secreted from podocytes, may modulate properties of glomerular endothelial cells involving integrin alpha-V/beta-3 and Akt signaling. May increase the motility of podocytes. May induce actin filament rearrangements in podocytes implicating integrin alpha-V/beta-3 and Rac1 activation. Binds to hematopoietic stem cells (HSC) and is involved in the regulation of HSC activity probably implicating down-regulation of IKZF1/IKAROS. This Homo sapiens (Human) protein is Angiopoietin-related protein 3 (ANGPTL3).